A 115-amino-acid polypeptide reads, in one-letter code: Large ribosomal subunit protein bL19 (115 aa).

It belongs to the bacterial ribosomal protein bL19 family.

Functionally, this protein is located at the 30S-50S ribosomal subunit interface and may play a role in the structure and function of the aminoacyl-tRNA binding site. This Streptococcus pyogenes serotype M1 protein is Large ribosomal subunit protein bL19.